Consider the following 130-residue polypeptide: Small ribosomal subunit protein uS8 (130 aa).

Belongs to the universal ribosomal protein uS8 family. As to quaternary structure, part of the 30S ribosomal subunit. Contacts proteins S5 and S12.

Functionally, one of the primary rRNA binding proteins, it binds directly to 16S rRNA central domain where it helps coordinate assembly of the platform of the 30S subunit. This chain is Small ribosomal subunit protein uS8, found in Chromohalobacter salexigens (strain ATCC BAA-138 / DSM 3043 / CIP 106854 / NCIMB 13768 / 1H11).